Here is a 497-residue protein sequence, read N- to C-terminus: Arginine/ornithine antiporter ArcD2 (497 aa).

The next 13 membrane-spanning stretches (helical) occupy residues 8-28, 41-61, 88-108, 127-147, 160-180, 220-240, 255-275, 297-317, 354-374, 378-398, 406-426, 429-449, and 462-482; these read GISL…GGVF, GGVV…VLSF, FLSG…FAVL, SLTI…MLLV, IVMI…IILF, IKGS…ATMM, VIGL…PYGY, VGGW…LGAW, LLIT…VANA, FIYM…AYLF, SVKN…ALYL, WQYV…FIGA, and WLGM…LICG.

The protein belongs to the amino acid-polyamine-organocation (APC) superfamily. Basic amino acid/polyamine antiporter (APA) (TC 2.A.3.2) family.

It is found in the cell membrane. It catalyses the reaction L-ornithine(in) + L-arginine(out) = L-ornithine(out) + L-arginine(in). Catalyzes electroneutral exchange between L-arginine and L-ornithine. Can also efficiently translocate L-alanine. May function in vivo as a L-arginine/L-alanine exchanger in a pathway together with the arcT gene, which is found adjacent to the arcD2 gene in the ADI gene cluster. The sequence is that of Arginine/ornithine antiporter ArcD2 from Lactococcus lactis subsp. cremoris (strain MG1363).